We begin with the raw amino-acid sequence, 130 residues long: Small ribosomal subunit protein uS9 (130 aa).

Belongs to the universal ribosomal protein uS9 family.

The protein is Small ribosomal subunit protein uS9 of Burkholderia cenocepacia (strain HI2424).